A 508-amino-acid polypeptide reads, in one-letter code: E3 ubiquitin-protein ligase XBAT32 (508 aa).

ANK repeat units follow at residues 50-79 (VRNSPLHYSAAQGHHEIVSLLVESGVDINL), 83-112 (RGQTALMQACQHGHWEVVLILILFGANIHR), 117-147 (NGGTALHLAALNGHPRCIRILLSEYIPSVPN), 177-206 (GGITPLHVAALNGHIETVQLLLDLGASVTQ), and 220-249 (AGSTALHYASCGGNTQCCQLLISKGACLAA). Residues 321–372 (CAVCLERKCTVAADGCAHEFCTNCALYLSTTSITSSKTSNVTPGSVPCPLCR) form an RING-type zinc finger.

As to quaternary structure, interacts with ACS4 and ACS7. In terms of tissue distribution, expressed in the vascular system of primary root, vascular tissue of leaves, stems and anthers.

The catalysed reaction is S-ubiquitinyl-[E2 ubiquitin-conjugating enzyme]-L-cysteine + [acceptor protein]-L-lysine = [E2 ubiquitin-conjugating enzyme]-L-cysteine + N(6)-ubiquitinyl-[acceptor protein]-L-lysine.. It functions in the pathway protein modification; protein ubiquitination. E3 ubiquitin-protein ligase that mediates ubiquitination of ACC synthases (ACS). Negatively regulates ethylene biosynthesis probably via ubiquitin-dependent degradation of ACS4 and ACS7 enzymes. Regulates lateral root formation and development by controlling ethylene production which inhibits lateral root formation at high concentration. This chain is E3 ubiquitin-protein ligase XBAT32 (XBAT32), found in Arabidopsis thaliana (Mouse-ear cress).